A 483-amino-acid chain; its full sequence is tRNA-2-methylthio-N(6)-dimethylallyladenosine synthase (483 aa).

An MTTase N-terminal domain is found at 31-148 (KKLYIETQGC…LPQMLDQHHA (118 aa)). 6 residues coordinate [4Fe-4S] cluster: cysteine 40, cysteine 77, cysteine 111, cysteine 192, cysteine 196, and cysteine 199. The region spanning 178–410 (RVEGFKAFVS…QQVIKQSSIE (233 aa)) is the Radical SAM core domain. In terms of domain architecture, TRAM spans 413-477 (DAMLGKIERV…LNLVYGELLN (65 aa)).

The protein belongs to the methylthiotransferase family. MiaB subfamily. In terms of assembly, monomer. [4Fe-4S] cluster serves as cofactor.

The protein localises to the cytoplasm. It carries out the reaction N(6)-dimethylallyladenosine(37) in tRNA + (sulfur carrier)-SH + AH2 + 2 S-adenosyl-L-methionine = 2-methylsulfanyl-N(6)-dimethylallyladenosine(37) in tRNA + (sulfur carrier)-H + 5'-deoxyadenosine + L-methionine + A + S-adenosyl-L-homocysteine + 2 H(+). Its function is as follows. Catalyzes the methylthiolation of N6-(dimethylallyl)adenosine (i(6)A), leading to the formation of 2-methylthio-N6-(dimethylallyl)adenosine (ms(2)i(6)A) at position 37 in tRNAs that read codons beginning with uridine. This is tRNA-2-methylthio-N(6)-dimethylallyladenosine synthase from Acinetobacter baumannii (strain ACICU).